A 393-amino-acid chain; its full sequence is Lipid-A-disaccharide synthase (393 aa).

Belongs to the LpxB family.

It carries out the reaction a lipid X + a UDP-2-N,3-O-bis[(3R)-3-hydroxyacyl]-alpha-D-glucosamine = a lipid A disaccharide + UDP + H(+). It participates in bacterial outer membrane biogenesis; LPS lipid A biosynthesis. Condensation of UDP-2,3-diacylglucosamine and 2,3-diacylglucosamine-1-phosphate to form lipid A disaccharide, a precursor of lipid A, a phosphorylated glycolipid that anchors the lipopolysaccharide to the outer membrane of the cell. This chain is Lipid-A-disaccharide synthase, found in Granulibacter bethesdensis (strain ATCC BAA-1260 / CGDNIH1).